Consider the following 306-residue polypeptide: Elongation factor Ts (306 aa).

The interval 80-83 (TDFV) is involved in Mg(2+) ion dislocation from EF-Tu.

This sequence belongs to the EF-Ts family.

The protein resides in the cytoplasm. In terms of biological role, associates with the EF-Tu.GDP complex and induces the exchange of GDP to GTP. It remains bound to the aminoacyl-tRNA.EF-Tu.GTP complex up to the GTP hydrolysis stage on the ribosome. This chain is Elongation factor Ts, found in Methylorubrum extorquens (strain CM4 / NCIMB 13688) (Methylobacterium extorquens).